The following is a 357-amino-acid chain: Putative diaminopimelate epimerase, chloroplastic (357 aa).

Residues 1–47 constitute a chloroplast transit peptide; the sequence is MSSATAAATATIAAAAAAAAKLAATPAPAPSRRRLTLRGNPTARRCV. Active-site residues include Cys-145 and Cys-300.

This sequence belongs to the diaminopimelate epimerase family.

It is found in the plastid. The protein resides in the chloroplast. It catalyses the reaction (2S,6S)-2,6-diaminopimelate = meso-2,6-diaminopimelate. It participates in amino-acid biosynthesis; L-lysine biosynthesis via DAP pathway; DL-2,6-diaminopimelate from LL-2,6-diaminopimelate: step 1/1. This is Putative diaminopimelate epimerase, chloroplastic (DAPF) from Oryza sativa subsp. indica (Rice).